A 537-amino-acid polypeptide reads, in one-letter code: Eukaryotic translation initiation factor 3 subunit L (537 aa).

Residues 301-513 (TFSSILLYIQ…IHIADTKVSH (213 aa)) enclose the PCI domain.

It belongs to the eIF-3 subunit L family. As to quaternary structure, component of the eukaryotic translation initiation factor 3 (eIF-3) complex.

Its subcellular location is the cytoplasm. Functionally, component of the eukaryotic translation initiation factor 3 (eIF-3) complex, which is involved in protein synthesis of a specialized repertoire of mRNAs and, together with other initiation factors, stimulates binding of mRNA and methionyl-tRNAi to the 40S ribosome. The eIF-3 complex specifically targets and initiates translation of a subset of mRNAs involved in cell proliferation. The polypeptide is Eukaryotic translation initiation factor 3 subunit L (Aedes aegypti (Yellowfever mosquito)).